The sequence spans 151 residues: UPF0756 membrane protein Lreu_0946 (151 aa).

4 consecutive transmembrane segments (helical) span residues 4 to 24, 52 to 72, 77 to 97, and 115 to 135; these read WLFL…SLII, WGVT…QIGF, AAFK…VAIL, and LVLG…GPVI.

This sequence belongs to the UPF0756 family.

It is found in the cell membrane. The polypeptide is UPF0756 membrane protein Lreu_0946 (Limosilactobacillus reuteri (strain DSM 20016) (Lactobacillus reuteri)).